A 155-amino-acid chain; its full sequence is MWAQAARVQFRAPLDRGRSFASKVGPRGKVQAADPKTQAPRLVPEGTDRVSAAVVEHLERLALVNFSSREAVDRLEKAVAFADQLHAVDTDGVEPLESVLEDRCLYLRSDKVAEGGCAEELLQNSNHVVEEYFVAPPGNIPLPDMVGKVPSSTAE.

Residues 1–20 constitute a mitochondrion transit peptide; it reads MWAQAARVQFRAPLDRGRSF. The interval 19-42 is disordered; that stretch reads SFASKVGPRGKVQAADPKTQAPRL.

It belongs to the GatC family. As to quaternary structure, subunit of the heterotrimeric GatCAB amidotransferase (AdT) complex, composed of A (QRSL1), B (GATB) and C (GATC) subunits.

The protein localises to the mitochondrion. The catalysed reaction is L-glutamyl-tRNA(Gln) + L-glutamine + ATP + H2O = L-glutaminyl-tRNA(Gln) + L-glutamate + ADP + phosphate + H(+). Its function is as follows. Allows the formation of correctly charged Gln-tRNA(Gln) through the transamidation of misacylated Glu-tRNA(Gln) in the mitochondria. The reaction takes place in the presence of glutamine and ATP through an activated gamma-phospho-Glu-tRNA(Gln). This chain is Glutamyl-tRNA(Gln) amidotransferase subunit C, mitochondrial (Gatc), found in Rattus norvegicus (Rat).